A 93-amino-acid chain; its full sequence is Acylphosphatase (93 aa).

In terms of domain architecture, Acylphosphatase-like spans arginine 7–arginine 93. Active-site residues include arginine 22 and asparagine 40.

This sequence belongs to the acylphosphatase family.

The enzyme catalyses an acyl phosphate + H2O = a carboxylate + phosphate + H(+). The sequence is that of Acylphosphatase (acyP) from Mycolicibacterium vanbaalenii (strain DSM 7251 / JCM 13017 / BCRC 16820 / KCTC 9966 / NRRL B-24157 / PYR-1) (Mycobacterium vanbaalenii).